Consider the following 1091-residue polypeptide: Ubiquitin carboxyl-terminal hydrolase 36 (1091 aa).

The segment at 115 to 152 is disordered; it reads ANGHDNNGRKLSDHPNQNHNHANPNGHHANPNELPKPK. Positions 128-146 are enriched in low complexity; that stretch reads HPNQNHNHANPNGHHANPN. Residues 176 to 484 form the USP domain; sequence SGMINAGNTC…NAYIMFYELD (309 aa). Cys-185 serves as the catalytic Nucleophile. Residue His-443 is the Proton acceptor of the active site. Ser-518 and Ser-522 each carry phosphoserine. Disordered regions lie at residues 523-572, 594-892, 972-1007, and 1068-1091; these read PAKF…KSPL, PTAN…ELLK, QRDL…GYNP, and LAAG…QQQS. Polar residues predominate over residues 547–572; that stretch reads TTIQFKPQHQPSHQQNGVQQSAKSPL. Low complexity predominate over residues 594 to 612; that stretch reads PTANGNKSSSNHSNHKSVN. The segment covering 643–652 has biased composition (basic and acidic residues); that stretch reads KMDDCMDSGK. Positions 653–667 are enriched in low complexity; that stretch reads PKSPVKTPVKTPLKS. Phosphothreonine occurs at positions 659 and 663. 2 positions are modified to phosphoserine: Ser-673 and Ser-675. A compositionally biased stretch (basic and acidic residues) spans 691-702; sequence RSSDSSDSEHEP. The span at 703–727 shows a compositional bias: polar residues; that stretch reads TTSSVQLNGHSKTNGSLSNGSSKST. Ser-749 bears the Phosphoserine mark. Over residues 749–759 the composition is skewed to acidic residues; that stretch reads SEDDDDDEDEP. The span at 769–780 shows a compositional bias: low complexity; that stretch reads PQKQSQSQSRSG. Positions 781–790 are enriched in pro residues; sequence PPSPKTPPSP. Residue Ser-783 is modified to Phosphoserine. Phosphothreonine is present on Thr-786. At Ser-789 the chain carries Phosphoserine. A compositionally biased stretch (acidic residues) spans 806–821; it reads DGDDDEDDDDDDDEVV. Thr-829 carries the phosphothreonine modification. 2 stretches are compositionally biased toward polar residues: residues 838-850 and 863-886; these read FASS…SPTT and AIKT…NGGT. A Phosphoserine modification is found at Ser-847. Thr-850 carries the phosphothreonine modification.

This sequence belongs to the peptidase C19 family. Interacts with atms/PAF1, but not with CycT.

The protein resides in the nucleus. The protein localises to the nucleolus. It carries out the reaction Thiol-dependent hydrolysis of ester, thioester, amide, peptide and isopeptide bonds formed by the C-terminal Gly of ubiquitin (a 76-residue protein attached to proteins as an intracellular targeting signal).. Required for maintaining multiple types of adult stem cells, including male and female germline, epithelial follicle cell and intestinal stem cells. May function as a transcriptional repressor by continually deubiquiting histone H2B at the promoters of genes critical for cellular differentiation, thereby preventing histone H3 'Lys-4' trimethylation (H3K4). Controls selective autophagy activation by ubiquitinated proteins. The chain is Ubiquitin carboxyl-terminal hydrolase 36 (Usp36) from Drosophila ananassae (Fruit fly).